Here is a 433-residue protein sequence, read N- to C-terminus: Ribulose bisphosphate carboxylase/oxygenase activase, chloroplastic (433 aa).

The segment covering 1–20 has biased composition (polar residues); that stretch reads MAAAFSSTVGAPASTPTRSS. The transit peptide at 1 to 53 directs the protein to the chloroplast; that stretch reads MAAAFSSTVGAPASTPTRSSFLGKKLNKPQVSAAVTYHGKSSSSNSRFKAMAA. A disordered region spans residues 1-60; that stretch reads MAAAFSSTVGAPASTPTRSSFLGKKLNKPQVSAAVTYHGKSSSSNSRFKAMAAKEVDETK. 161–168 is a binding site for ATP; the sequence is GGKGQGKS.

This sequence belongs to the RuBisCO activase family.

Its subcellular location is the plastid. The protein localises to the chloroplast stroma. Its function is as follows. Activation of RuBisCO (ribulose-1,5-bisphosphate carboxylase/oxygenase; EC 4.1.1.39) involves the ATP-dependent carboxylation of the epsilon-amino group of lysine leading to a carbamate structure. This Zea mays (Maize) protein is Ribulose bisphosphate carboxylase/oxygenase activase, chloroplastic (RCA1).